The chain runs to 120 residues: Putative gamma-glutamylcyclotransferase MJ1514 (120 aa).

Tyr-7–Leu-10 is a binding site for substrate. The active-site Proton acceptor is Glu-74.

This sequence belongs to the gamma-glutamylcyclotransferase family.

Its function is as follows. Putative gamma-glutamylcyclotransferase. The sequence is that of Putative gamma-glutamylcyclotransferase MJ1514 from Methanocaldococcus jannaschii (strain ATCC 43067 / DSM 2661 / JAL-1 / JCM 10045 / NBRC 100440) (Methanococcus jannaschii).